Consider the following 168-residue polypeptide: Putative defense protein 1 (168 aa).

The signal sequence occupies residues 1 to 18 (MMFAYIVAVVSALALTSA). One can recognise a Reelin domain in the interval 19 to 168 (FPTGAPRSAC…SAPVKILSHH (150 aa)). An intrachain disulfide couples C28 to C105.

The protein belongs to the insect defense protein family. In terms of tissue distribution, very highly expressed in midgut, and highly expressed in fat body, silk gland and epidermis.

It is found in the secreted. As this protein is expressed upon bacterial infection, it may have antimicrobial activity. The protein is Putative defense protein 1 of Antheraea mylitta (Tasar silkworm).